A 304-amino-acid polypeptide reads, in one-letter code: MIKQRTPKKVIQATGVGLHSGEKVLLTLRPAPVNTGIVFRRVDLSPVVEIPASYEYVGDTMLCTTLHHGKVKIATVEHLLSALAGLGIDNAYIDVNAPEIPIMDGSAAPFVFLIQSAGIREQNAAKRYIRILKPIRVEENGKYVQFLPHKGYKITFTIGFEHPVFNDRPQTVSFDFSGTSYVKEVCRARTFGFLSDYEKLRECDLAKGGSLDNAIVVDDYRVLNEDGLRFESEFVTHKVLDAIGDLYLLGSSLIGAFEGYKSGHELNNRLLRELMVRQDAWEYTYFDTENYLPAVHPEYYPVEA.

Histidine 78, histidine 237, and aspartate 241 together coordinate Zn(2+). Histidine 264 (proton donor) is an active-site residue.

Belongs to the LpxC family. Zn(2+) is required as a cofactor.

It catalyses the reaction a UDP-3-O-[(3R)-3-hydroxyacyl]-N-acetyl-alpha-D-glucosamine + H2O = a UDP-3-O-[(3R)-3-hydroxyacyl]-alpha-D-glucosamine + acetate. The protein operates within glycolipid biosynthesis; lipid IV(A) biosynthesis; lipid IV(A) from (3R)-3-hydroxytetradecanoyl-[acyl-carrier-protein] and UDP-N-acetyl-alpha-D-glucosamine: step 2/6. In terms of biological role, catalyzes the hydrolysis of UDP-3-O-myristoyl-N-acetylglucosamine to form UDP-3-O-myristoylglucosamine and acetate, the committed step in lipid A biosynthesis. This Legionella pneumophila (strain Paris) protein is UDP-3-O-acyl-N-acetylglucosamine deacetylase.